Reading from the N-terminus, the 425-residue chain is Serine--tRNA ligase (425 aa).

235–237 is an L-serine binding site; the sequence is TAE. 266 to 268 lines the ATP pocket; that stretch reads RSE. Glu289 is a binding site for L-serine. ATP is bound at residue 353 to 356; it reads EISS. Ser389 provides a ligand contact to L-serine.

Belongs to the class-II aminoacyl-tRNA synthetase family. Type-1 seryl-tRNA synthetase subfamily. Homodimer. The tRNA molecule binds across the dimer.

It is found in the cytoplasm. The catalysed reaction is tRNA(Ser) + L-serine + ATP = L-seryl-tRNA(Ser) + AMP + diphosphate + H(+). It carries out the reaction tRNA(Sec) + L-serine + ATP = L-seryl-tRNA(Sec) + AMP + diphosphate + H(+). It functions in the pathway aminoacyl-tRNA biosynthesis; selenocysteinyl-tRNA(Sec) biosynthesis; L-seryl-tRNA(Sec) from L-serine and tRNA(Sec): step 1/1. Catalyzes the attachment of serine to tRNA(Ser). Is also able to aminoacylate tRNA(Sec) with serine, to form the misacylated tRNA L-seryl-tRNA(Sec), which will be further converted into selenocysteinyl-tRNA(Sec). This is Serine--tRNA ligase from Desulfotalea psychrophila (strain LSv54 / DSM 12343).